A 1169-amino-acid chain; its full sequence is Protein qua-1 (1169 aa).

The N-terminal stretch at 1–22 (MRRLSAILPILLLSNFWPTVES) is a signal peptide. 2 disordered regions span residues 261–338 (GATG…AGTN) and 368–933 (AGGV…RTSS). The segment covering 278–292 (ESNGNNNNSFEGGRS) has biased composition (low complexity). Over residues 312–337 (GAGGKGGAGADGAAGSGAGAGAGAGT) the composition is skewed to gly residues. Composition is skewed to acidic residues over residues 426-437 (DEEDEEDNGDED) and 453-464 (DDGDGDEDDDGT). The span at 511 to 523 (SPDDNDLLEKDEN) shows a compositional bias: basic and acidic residues. 5 stretches are compositionally biased toward gly residues: residues 526-536 (NGKGGAGNGNG), 545-572 (KGNG…GTGD), 605-634 (DGNG…GSGD), 656-700 (GSNG…GGTG), and 727-752 (NAEG…GAGG). Positions 753-774 (KGDKSDSESGNEADGKDGKKNE) are enriched in basic and acidic residues. Residues 775-791 (GAGGEAAAGSGGANKGG) show a composition bias toward gly residues. Residues 793–803 (DGDDDDVDVTD) are compositionally biased toward acidic residues. Polar residues predominate over residues 840 to 855 (GTVQTGAKHNAESSAS). Residues 889 to 906 (SGTSESVTNGSGATESGS) show a composition bias toward low complexity. Over residues 907–923 (TGSGTTGTGTSGTGSSG) the composition is skewed to gly residues. The span at 924-933 (TGASAARTSS) shows a compositional bias: low complexity.

As to expression, transiently expressed in head cells.

The protein resides in the cytoplasmic vesicle. The protein localises to the secreted. It is found in the extracellular space. It localises to the extracellular matrix. Required for cuticle shedding and normal alae morphology and localization, and subsequently larval development. In Caenorhabditis elegans, this protein is Protein qua-1.